The primary structure comprises 31 residues: Photosystem II reaction center protein T (31 aa).

The helical transmembrane segment at 3–23 (SFAYILILGLAIATLFFAIAF) threads the bilayer.

Belongs to the PsbT family. In terms of assembly, PSII is composed of 1 copy each of membrane proteins PsbA, PsbB, PsbC, PsbD, PsbE, PsbF, PsbH, PsbI, PsbJ, PsbK, PsbL, PsbM, PsbT, PsbX, PsbY, PsbZ, Psb30/Ycf12, peripheral proteins PsbO, CyanoQ (PsbQ), PsbU, PsbV and a large number of cofactors. It forms dimeric complexes.

Its subcellular location is the cellular thylakoid membrane. Functionally, found at the monomer-monomer interface of the photosystem II (PS II) dimer, plays a role in assembly and dimerization of PSII. PSII is a light-driven water plastoquinone oxidoreductase, using light energy to abstract electrons from H(2)O, generating a proton gradient subsequently used for ATP formation. The protein is Photosystem II reaction center protein T of Synechococcus sp. (strain CC9311).